The chain runs to 495 residues: Amidophosphoribosyltransferase (495 aa).

The disordered stretch occupies residues 1-22; the sequence is MFPPSSDLTELNDGQPLSGHHA. Positions 1-28 are excised as a propeptide; sequence MFPPSSDLTELNDGQPLSGHHADKPEEA. The active-site Nucleophile is C29. Positions 29–254 constitute a Glutamine amidotransferase type-2 domain; the sequence is CGVFGIYAPE…AGELVHITES (226 aa). A [4Fe-4S] cluster-binding site is contributed by C270. Mg(2+) is bound by residues S317, D379, and D380. Residues C416, C467, and C470 each contribute to the [4Fe-4S] cluster site.

It in the C-terminal section; belongs to the purine/pyrimidine phosphoribosyltransferase family. The cofactor is Mg(2+). Requires [4Fe-4S] cluster as cofactor.

The enzyme catalyses 5-phospho-beta-D-ribosylamine + L-glutamate + diphosphate = 5-phospho-alpha-D-ribose 1-diphosphate + L-glutamine + H2O. Its pathway is purine metabolism; IMP biosynthesis via de novo pathway; N(1)-(5-phospho-D-ribosyl)glycinamide from 5-phospho-alpha-D-ribose 1-diphosphate: step 1/2. In terms of biological role, catalyzes the formation of phosphoribosylamine from phosphoribosylpyrophosphate (PRPP) and glutamine. This Synechocystis sp. (strain ATCC 27184 / PCC 6803 / Kazusa) protein is Amidophosphoribosyltransferase.